Reading from the N-terminus, the 253-residue chain is Uracil-DNA glycosylase (253 aa).

Catalysis depends on Asp-79, which acts as the Proton acceptor.

The protein belongs to the uracil-DNA glycosylase (UDG) superfamily. UNG family.

Its subcellular location is the cytoplasm. It catalyses the reaction Hydrolyzes single-stranded DNA or mismatched double-stranded DNA and polynucleotides, releasing free uracil.. Its function is as follows. Excises uracil residues from the DNA which can arise as a result of misincorporation of dUMP residues by DNA polymerase or due to deamination of cytosine. This chain is Uracil-DNA glycosylase, found in Xylella fastidiosa (strain 9a5c).